The chain runs to 264 residues: ELL-associated factor 2 (264 aa).

Disordered regions lie at residues 114-154 (EGSS…PSSP) and 169-264 (MDQL…DSDD). Over residues 117-142 (SKVQSRIEQQQQQIRNSSKTPNNIKN) the composition is skewed to polar residues. Residues 173–196 (SSSDSSSDSKSSSSSSSSSENSSS) are compositionally biased toward low complexity. Basic and acidic residues predominate over residues 228-238 (VPDKDASHNRS). A compositionally biased stretch (polar residues) spans 239 to 264 (QENSGHMMNTLRSDLQLSESGSDSDD).

It belongs to the EAF family.

It localises to the nucleus speckle. Its function is as follows. May act as a transcriptional transactivator. This chain is ELL-associated factor 2 (EAF2), found in Gallus gallus (Chicken).